Consider the following 110-residue polypeptide: UPF0122 protein Sca_0859 (110 aa).

It belongs to the UPF0122 family.

Functionally, might take part in the signal recognition particle (SRP) pathway. This is inferred from the conservation of its genetic proximity to ftsY/ffh. May be a regulatory protein. This Staphylococcus carnosus (strain TM300) protein is UPF0122 protein Sca_0859.